A 273-amino-acid chain; its full sequence is Tryptophan synthase alpha chain (273 aa).

Residues Glu-56 and Asp-67 each act as proton acceptor in the active site.

The protein belongs to the TrpA family. In terms of assembly, tetramer of two alpha and two beta chains.

The catalysed reaction is (1S,2R)-1-C-(indol-3-yl)glycerol 3-phosphate + L-serine = D-glyceraldehyde 3-phosphate + L-tryptophan + H2O. Its pathway is amino-acid biosynthesis; L-tryptophan biosynthesis; L-tryptophan from chorismate: step 5/5. Functionally, the alpha subunit is responsible for the aldol cleavage of indoleglycerol phosphate to indole and glyceraldehyde 3-phosphate. The chain is Tryptophan synthase alpha chain from Shewanella baltica (strain OS155 / ATCC BAA-1091).